The primary structure comprises 1983 residues: Nonribosomal peptide synthetase verP (1983 aa).

Positions 11-405 are adenylation 1; it reads FAQAASRCPD…FRGRKDRTVK (395 aa). The 77-residue stretch at 526 to 602 folds into the Carrier 1 domain; sequence DRHLDTLLTV…DVAPLITSRA (77 aa). S563 bears the O-(pantetheine 4'-phosphoryl)serine mark. The condensation 1 stretch occupies residues 769–1047; sequence ETDELTVVLT…GQHFKHALYS (279 aa). The tract at residues 1089–1469 is adenylation 2; that stretch reads QVMGQFPSLI…GRIDRLVKLR (381 aa). One can recognise a Carrier 2 domain in the interval 1584-1662; it reads ITRPKIEDKL…DQINMVRALL (79 aa). Position 1622 is an O-(pantetheine 4'-phosphoryl)serine (S1622). The condensation 2 stretch occupies residues 1652 to 1976; the sequence is KDQINMVRAL…GGLEHPLFEC (325 aa).

It belongs to the NRP synthetase family.

The protein operates within mycotoxin biosynthesis. In terms of biological role, nonribosomal peptide synthetase; part of the gene cluster that mediates the biosynthesis of 11'-deoxyverticillin A, one of the dimeric epipolythiodioxopiperazines (ETPs) from the verticillin family that act as mycotoxins. 11'-deoxyverticillin A is required for normal conidiation. The nonribosomal peptide synthetase verP is speculated to be responsible for condensation of amino acids to form the carbon skeleton of verticillin, whereas the cluster-specific tailoring enzymes are involved in further modifications leading to the production of 11'-deoxyverticillin A. In Clonostachys rogersoniana, this protein is Nonribosomal peptide synthetase verP.